Consider the following 212-residue polypeptide: MKPPSSIQTSEFDSSDEEPIEDEQTPIHISWLSLSRVNCSQFLGLCALPGCKFKDVRRNVQKDTEELKSCGIQDIFVFCTRGELSKYRVPNLLDLYQQCGIITHHHPIADGGTPDIASCCEIMEELTTCLKNYRKTLIHCYGGLGRSCLVAACLLLYLSDTISPEQAIDSLRDLRGSGAIQTIKQYNYLHEFRDKLAAHLSSRDSQSRSVSR.

Positions 1-12 are enriched in polar residues; sequence MKPPSSIQTSEF. The segment at 1-20 is disordered; that stretch reads MKPPSSIQTSEFDSSDEEPI. Positions 1 to 34 are interaction with CDK2; it reads MKPPSSIQTSEFDSSDEEPIEDEQTPIHISWLSL. The region spanning 33 to 201 is the Tyrosine-protein phosphatase domain; that stretch reads SLSRVNCSQF…FRDKLAAHLS (169 aa). The active-site Phosphocysteine intermediate is Cys-140.

It belongs to the protein-tyrosine phosphatase family. In terms of assembly, interacts with cyclin-dependent kinases such as CDK1, CDK2 and CDK3. Does not interact with CDK4. Interacts (via C-terminus) with phosphorylated CDK2 (via C-terminal helix). Interacts with MS4A3 (via C-terminus); the interaction enhances CDKN3 enzymatic activity.

It localises to the cytoplasm. It is found in the perinuclear region. The catalysed reaction is O-phospho-L-tyrosyl-[protein] + H2O = L-tyrosyl-[protein] + phosphate. It catalyses the reaction O-phospho-L-threonyl-[protein] + H2O = L-threonyl-[protein] + phosphate. It carries out the reaction O-phospho-L-seryl-[protein] + H2O = L-seryl-[protein] + phosphate. In terms of biological role, may play a role in cell cycle regulation. Dual specificity CC phosphatase active toward substrates containing either phosphotyrosine or phosphoserine residues. Dephosphorylates CDK2 at 'Thr-160' in a cyclin-dependent manner. The sequence is that of Cyclin-dependent kinase inhibitor 3 from Homo sapiens (Human).